A 24-amino-acid polypeptide reads, in one-letter code: Brevinin-1Pd (24 aa).

Cys-18 and Cys-24 are joined by a disulfide.

Expressed by the skin glands.

The protein resides in the secreted. Functionally, antibacterial activity against Gram-positive bacterium S.aureus and Gram-negative bacterium E.coli. Has activity against C.albicans. This chain is Brevinin-1Pd, found in Lithobates pipiens (Northern leopard frog).